The following is a 92-amino-acid chain: MTRSLKKGPFVDHHLLAKVEKAVATKDKKPVKTWSRRSMVLPEFIGLTIAVHNGKQHVPVYITDQMVGHKLGEFALTRTFKGHPADKKVQKK.

Belongs to the universal ribosomal protein uS19 family.

Protein S19 forms a complex with S13 that binds strongly to the 16S ribosomal RNA. This is Small ribosomal subunit protein uS19 from Paracidovorax citrulli (strain AAC00-1) (Acidovorax citrulli).